The chain runs to 157 residues: Protein Smg homolog (157 aa).

Belongs to the Smg family.

This Pseudoalteromonas translucida (strain TAC 125) protein is Protein Smg homolog.